We begin with the raw amino-acid sequence, 604 residues long: M-phase inducer phosphatase cdc-25.1 (604 aa).

Disordered stretches follow at residues 33 to 67 and 127 to 188; these read PKTL…DVDF and EKRV…PFGD. The span at 44–54 shows a compositional bias: polar residues; sequence RDSGVSMTSCS. Positions 127 to 138 are enriched in basic and acidic residues; the sequence is EKRVMSERPTDN. The 109-residue stretch at 305-413 folds into the Rhodanese domain; it reads FDKKYIIVDC…LWSTAECRQI (109 aa). 2 disordered regions span residues 443–464 and 562–588; these read ASLK…CTRS and DFPD…GGHQ.

It belongs to the MPI phosphatase family.

It carries out the reaction O-phospho-L-tyrosyl-[protein] + H2O = L-tyrosyl-[protein] + phosphate. The chain is M-phase inducer phosphatase cdc-25.1 (cdc-25.1) from Caenorhabditis elegans.